The primary structure comprises 412 residues: MIDIKLLQKDFDYVVKALQKKGVDNALLNNLKDLALKTKQKRQEMEDVTAEQNLLSKEFGRYKKENLDISELQEKINALKTKKQELEDEVRTLEDDLNSIILSVPNMPDENVPFGVDENENVILEVIGEKPTFNFTPKEHWDLSCDWLDFERGVKLAKSRFTAIKGDGARLERALINYMLDFNRQRGFNEWYVPFMANSNTLQGTGQLPKFADDLFKIEGEDLYLIPTAEVSLTNLYNDEIIDKSELPLLLTSYTPCFRKEAGSAGRDTRGLIRQHQFDKVEMVAITSQEQSDEIFEKMVNCASDLLSSLGLCHQKVQLCSGDLGFSAAVTIDLEVWLPGQNKFREISSISNTRDFQARRAKIRYKEDKKNILAHTLNGSSLAVGRTLLAIMENYQQADGSVKIPEVLKKYL.

228 to 230 (TAE) contributes to the L-serine binding site. ATP is bound at residue 259–261 (RKE). Glu282 provides a ligand contact to L-serine. ATP is bound at residue 346 to 349 (EISS). Ser380 contributes to the L-serine binding site.

Belongs to the class-II aminoacyl-tRNA synthetase family. Type-1 seryl-tRNA synthetase subfamily. Homodimer. The tRNA molecule binds across the dimer.

Its subcellular location is the cytoplasm. The enzyme catalyses tRNA(Ser) + L-serine + ATP = L-seryl-tRNA(Ser) + AMP + diphosphate + H(+). It carries out the reaction tRNA(Sec) + L-serine + ATP = L-seryl-tRNA(Sec) + AMP + diphosphate + H(+). It functions in the pathway aminoacyl-tRNA biosynthesis; selenocysteinyl-tRNA(Sec) biosynthesis; L-seryl-tRNA(Sec) from L-serine and tRNA(Sec): step 1/1. Its function is as follows. Catalyzes the attachment of serine to tRNA(Ser). Is also able to aminoacylate tRNA(Sec) with serine, to form the misacylated tRNA L-seryl-tRNA(Sec), which will be further converted into selenocysteinyl-tRNA(Sec). The polypeptide is Serine--tRNA ligase (Aliarcobacter butzleri (strain RM4018) (Arcobacter butzleri)).